A 141-amino-acid chain; its full sequence is ATP synthase epsilon chain (141 aa).

The protein belongs to the ATPase epsilon chain family. In terms of assembly, F-type ATPases have 2 components, CF(1) - the catalytic core - and CF(0) - the membrane proton channel. CF(1) has five subunits: alpha(3), beta(3), gamma(1), delta(1), epsilon(1). CF(0) has three main subunits: a, b and c.

Its subcellular location is the cell inner membrane. Its function is as follows. Produces ATP from ADP in the presence of a proton gradient across the membrane. This chain is ATP synthase epsilon chain, found in Pseudomonas fluorescens (strain Pf0-1).